The following is a 1343-amino-acid chain: uncharacterized protein (1343 aa).

A helical transmembrane segment spans residues 432 to 449; sequence LYVYFVTTKTGVVAFSLL.

Belongs to the IIV-6 295L family.

The protein localises to the membrane. This is an uncharacterized protein from Acheta domesticus (House cricket).